Here is a 508-residue protein sequence, read N- to C-terminus: Phenylalanine--tRNA ligase alpha subunit (508 aa).

Ala2 carries the N-acetylalanine modification. Phosphoserine is present on residues Ser193 and Ser301. At Lys311 the chain carries N6-acetyllysine. Residues Thr329, 372 to 374 (QIE), and Tyr412 contribute to the L-phenylalanine site. Residue Glu414 coordinates Mg(2+). L-phenylalanine is bound at residue Phe438.

The protein belongs to the class-II aminoacyl-tRNA synthetase family. Phe-tRNA synthetase alpha subunit type 2 subfamily. Heterotetramer; dimer of two heterodimers formed by FARSA and FARSB. Mg(2+) serves as cofactor.

It is found in the cytoplasm. The enzyme catalyses tRNA(Phe) + L-phenylalanine + ATP = L-phenylalanyl-tRNA(Phe) + AMP + diphosphate + H(+). In Rattus norvegicus (Rat), this protein is Phenylalanine--tRNA ligase alpha subunit (Farsa).